The primary structure comprises 415 residues: Histidine--tRNA ligase (415 aa).

This sequence belongs to the class-II aminoacyl-tRNA synthetase family. In terms of assembly, homodimer.

The protein localises to the cytoplasm. The enzyme catalyses tRNA(His) + L-histidine + ATP = L-histidyl-tRNA(His) + AMP + diphosphate + H(+). The protein is Histidine--tRNA ligase of Gluconobacter oxydans (strain 621H) (Gluconobacter suboxydans).